The following is a 187-amino-acid chain: UPF0200 protein PYRAB09750 (187 aa).

7–14 serves as a coordination point for ATP; that stretch reads GMPGSGKG.

Belongs to the UPF0200 family.

This is UPF0200 protein PYRAB09750 from Pyrococcus abyssi (strain GE5 / Orsay).